Consider the following 410-residue polypeptide: PHAF1 protein At3g51130 (410 aa).

It belongs to the PHAF1 family.

This is PHAF1 protein At3g51130 from Arabidopsis thaliana (Mouse-ear cress).